The primary structure comprises 135 residues: Large ribosomal subunit protein bL21 (135 aa).

Positions 114-135 are disordered; that stretch reads EAEKETPVLDETPAEEVETAAE. Residues 125 to 135 show a composition bias toward acidic residues; it reads TPAEEVETAAE.

This sequence belongs to the bacterial ribosomal protein bL21 family. Part of the 50S ribosomal subunit. Contacts protein L20.

Its function is as follows. This protein binds to 23S rRNA in the presence of protein L20. This chain is Large ribosomal subunit protein bL21, found in Nostoc punctiforme (strain ATCC 29133 / PCC 73102).